A 329-amino-acid chain; its full sequence is ATP-dependent (S)-NAD(P)H-hydrate dehydratase (329 aa).

The YjeF C-terminal domain maps to 35–326; sequence TLQLVRNIIP…AEVGAAFSKL (292 aa). Tyr67 is modified (phosphotyrosine). Residues Gly135 and 188–194 each bind (6S)-NADPHX; that span reads NHMEFSR. Residues Asn207 and Asn222 are each glycosylated (N-linked (GlcNAc...) asparagine). ATP contacts are provided by residues 228–232 and 247–256; these read KGERD and GSSRRCGGQG. Residue Asp257 participates in (6S)-NADPHX binding. Asn279 carries an N-linked (GlcNAc...) asparagine glycan.

Belongs to the NnrD/CARKD family. Mg(2+) serves as cofactor.

It localises to the mitochondrion. The enzyme catalyses (6S)-NADHX + ATP = ADP + phosphate + NADH + H(+). It carries out the reaction (6S)-NADPHX + ATP = ADP + phosphate + NADPH + H(+). Its function is as follows. Catalyzes the dehydration of the S-form of NAD(P)HX at the expense of ATP, which is converted to ADP. Together with NAD(P)HX epimerase, which catalyzes the epimerization of the S- and R-forms, the enzyme allows the repair of both epimers of NAD(P)HX, a damaged form of NAD(P)H that is a result of enzymatic or heat-dependent hydration. The protein is ATP-dependent (S)-NAD(P)H-hydrate dehydratase of Pongo abelii (Sumatran orangutan).